The primary structure comprises 552 residues: CTP synthase (552 aa).

Residues Met-1–Leu-270 form an amidoligase domain region. Ser-13 provides a ligand contact to CTP. UTP is bound at residue Ser-13. ATP is bound by residues Ser-14–Ile-19 and Asp-71. Positions 71 and 144 each coordinate Mg(2+). CTP-binding positions include Asp-151 to Glu-153, Lys-191 to Gln-196, and Lys-227. UTP-binding positions include Lys-191–Gln-196 and Lys-227. Residues Thr-295–Ala-547 form the Glutamine amidotransferase type-1 domain. Gly-356 is a binding site for L-glutamine. Cys-383 acts as the Nucleophile; for glutamine hydrolysis in catalysis. L-glutamine contacts are provided by residues Leu-384–Gln-387, Glu-407, and Arg-473. Residues His-520 and Glu-522 contribute to the active site.

It belongs to the CTP synthase family. In terms of assembly, homotetramer.

It carries out the reaction UTP + L-glutamine + ATP + H2O = CTP + L-glutamate + ADP + phosphate + 2 H(+). The enzyme catalyses L-glutamine + H2O = L-glutamate + NH4(+). The catalysed reaction is UTP + NH4(+) + ATP = CTP + ADP + phosphate + 2 H(+). It functions in the pathway pyrimidine metabolism; CTP biosynthesis via de novo pathway; CTP from UDP: step 2/2. With respect to regulation, allosterically activated by GTP, when glutamine is the substrate; GTP has no effect on the reaction when ammonia is the substrate. The allosteric effector GTP functions by stabilizing the protein conformation that binds the tetrahedral intermediate(s) formed during glutamine hydrolysis. Inhibited by the product CTP, via allosteric rather than competitive inhibition. Its function is as follows. Catalyzes the ATP-dependent amination of UTP to CTP with either L-glutamine or ammonia as the source of nitrogen. Regulates intracellular CTP levels through interactions with the four ribonucleotide triphosphates. The sequence is that of CTP synthase from Burkholderia cenocepacia (strain HI2424).